We begin with the raw amino-acid sequence, 562 residues long: Protein FAM222B (562 aa).

2 stretches are compositionally biased toward low complexity: residues 155–167 (QQAL…LAHA) and 183–201 (ALSH…HPQP). 3 disordered regions span residues 155–203 (QQAL…QPMA), 219–245 (LQHP…VTVS), and 537–562 (AHRA…PGYR).

Belongs to the FAM222 family.

The chain is Protein FAM222B (FAM222B) from Homo sapiens (Human).